The chain runs to 161 residues: Small ribosomal subunit protein uS8m (161 aa).

Belongs to the universal ribosomal protein uS8 family. As to quaternary structure, component of the mitochondrial small ribosomal subunit (mt-SSU). Mature N.crassa 74S mitochondrial ribosomes consist of a small (37S) and a large (54S) subunit. The 37S small subunit contains a 16S ribosomal RNA (16S mt-rRNA) and 32 different proteins. The 54S large subunit contains a 23S rRNA (23S mt-rRNA) and 42 different proteins.

It is found in the mitochondrion. In terms of biological role, component of the mitochondrial ribosome (mitoribosome), a dedicated translation machinery responsible for the synthesis of mitochondrial genome-encoded proteins, including at least some of the essential transmembrane subunits of the mitochondrial respiratory chain. The mitoribosomes are attached to the mitochondrial inner membrane and translation products are cotranslationally integrated into the membrane. The chain is Small ribosomal subunit protein uS8m (mrps8) from Neurospora crassa (strain ATCC 24698 / 74-OR23-1A / CBS 708.71 / DSM 1257 / FGSC 987).